The chain runs to 298 residues: Max-like protein X (298 aa).

The segment at 1–63 is disordered; sequence MTEPGASPED…PRGCREDSSH (63 aa). A Phosphoserine modification is found at serine 7. Residues 28–37 show a composition bias toward basic residues; the sequence is GRARARRGAG. Phosphoserine occurs at positions 45, 48, 74, 77, and 98. Residues 91–145 are disordered; it reads SVVSRANSIGSTSASSVPNTDDEDSDYHQEAYKESYKDRRRRAHTQAEQKRRDAI. Polar residues predominate over residues 94 to 109; sequence SRANSIGSTSASSVPN. Composition is skewed to basic and acidic residues over residues 116–127 and 135–145; these read DYHQEAYKESYK and TQAEQKRRDAI. Residues 129 to 187 form the bHLH domain; the sequence is RRRRAHTQAEQKRRDAIKRGYDDLQTIVPTCQQQDFSIGSQKLSKAIVLQKTIDYIQFL. Residues 140-160 form a leucine-zipper region; sequence KRRDAIKRGYDDLQTIVPTCQ.

As to quaternary structure, efficient DNA binding requires dimerization with another bHLH protein. Binds DNA as a heterodimer with MAD1, MAD4, MNT, WBSCR14 and MLXIP. Can also bind DNA as a homodimer. In terms of tissue distribution, expressed in all tissues tested, including spleen, thymus, prostate, ovary, intestine, colon, peripheral blood leukocyte, heart, liver, skeletal muscle and kidney. Lower levels of expression in testis, brain, placenta and lung.

It localises to the cytoplasm. Its subcellular location is the nucleus. Its function is as follows. Transcription regulator. Forms a sequence-specific DNA-binding protein complex with MAD1, MAD4, MNT, WBSCR14 and MLXIP which recognizes the core sequence 5'-CACGTG-3'. The TCFL4-MAD1, TCFL4-MAD4, TCFL4-WBSCR14 complexes are transcriptional repressors. Plays a role in transcriptional activation of glycolytic target genes. Involved in glucose-responsive gene regulation. The sequence is that of Max-like protein X (MLX) from Homo sapiens (Human).